A 68-amino-acid polypeptide reads, in one-letter code: Protein SlyX homolog (68 aa).

It belongs to the SlyX family.

The protein is Protein SlyX homolog of Pseudomonas putida (strain ATCC 700007 / DSM 6899 / JCM 31910 / BCRC 17059 / LMG 24140 / F1).